The sequence spans 219 residues: Phosphatidylserine decarboxylase proenzyme (219 aa).

The active-site Schiff-base intermediate with substrate; via pyruvic acid is the serine 188. A Pyruvic acid (Ser); by autocatalysis modification is found at serine 188.

This sequence belongs to the phosphatidylserine decarboxylase family. PSD-A subfamily. In terms of assembly, heterodimer of a large membrane-associated beta subunit and a small pyruvoyl-containing alpha subunit. Requires pyruvate as cofactor. Post-translationally, is synthesized initially as an inactive proenzyme. Formation of the active enzyme involves a self-maturation process in which the active site pyruvoyl group is generated from an internal serine residue via an autocatalytic post-translational modification. Two non-identical subunits are generated from the proenzyme in this reaction, and the pyruvate is formed at the N-terminus of the alpha chain, which is derived from the carboxyl end of the proenzyme. The post-translation cleavage follows an unusual pathway, termed non-hydrolytic serinolysis, in which the side chain hydroxyl group of the serine supplies its oxygen atom to form the C-terminus of the beta chain, while the remainder of the serine residue undergoes an oxidative deamination to produce ammonia and the pyruvoyl prosthetic group on the alpha chain.

The protein resides in the cell membrane. The enzyme catalyses a 1,2-diacyl-sn-glycero-3-phospho-L-serine + H(+) = a 1,2-diacyl-sn-glycero-3-phosphoethanolamine + CO2. It functions in the pathway phospholipid metabolism; phosphatidylethanolamine biosynthesis; phosphatidylethanolamine from CDP-diacylglycerol: step 2/2. Its function is as follows. Catalyzes the formation of phosphatidylethanolamine (PtdEtn) from phosphatidylserine (PtdSer). The protein is Phosphatidylserine decarboxylase proenzyme of Geobacter sp. (strain M21).